Here is a 1337-residue protein sequence, read N- to C-terminus: DNA-directed RNA polymerase subunit beta' (1337 aa).

Zn(2+) is bound by residues C60, C62, C75, and C78. Residues D536, D538, and D540 each contribute to the Mg(2+) site. Positions 895, 974, 981, and 984 each coordinate Zn(2+).

Belongs to the RNA polymerase beta' chain family. In terms of assembly, the RNAP catalytic core consists of 2 alpha, 1 beta, 1 beta' and 1 omega subunit. When a sigma factor is associated with the core the holoenzyme is formed, which can initiate transcription. Requires Mg(2+) as cofactor. Zn(2+) serves as cofactor.

The catalysed reaction is RNA(n) + a ribonucleoside 5'-triphosphate = RNA(n+1) + diphosphate. DNA-dependent RNA polymerase catalyzes the transcription of DNA into RNA using the four ribonucleoside triphosphates as substrates. This chain is DNA-directed RNA polymerase subunit beta', found in Bifidobacterium adolescentis (strain ATCC 15703 / DSM 20083 / NCTC 11814 / E194a).